The sequence spans 144 residues: 3-dehydroquinate dehydratase (144 aa).

Tyr-22 (proton acceptor) is an active-site residue. Positions 71, 77, and 84 each coordinate substrate. The Proton donor role is filled by His-97. Residues Ile-98 to Ser-99 and Arg-108 contribute to the substrate site.

The protein belongs to the type-II 3-dehydroquinase family. As to quaternary structure, homododecamer.

The catalysed reaction is 3-dehydroquinate = 3-dehydroshikimate + H2O. Its pathway is metabolic intermediate biosynthesis; chorismate biosynthesis; chorismate from D-erythrose 4-phosphate and phosphoenolpyruvate: step 3/7. In terms of biological role, catalyzes a trans-dehydration via an enolate intermediate. This chain is 3-dehydroquinate dehydratase, found in Thermotoga petrophila (strain ATCC BAA-488 / DSM 13995 / JCM 10881 / RKU-1).